Consider the following 1285-residue polypeptide: MWSGDRSAAAGSGGAVVTVAFTNARDCFLRLPRRLVAQLHLLQNQAIEVTWDRQPTYLSWVEGRHFNDQGENVAEINRQVGQKLGLCSGEQVFLRPCSHVVSCQQVEVEPLSADDWEILELHAVSLEQHLLDQIRIVFPKAVVPIWVDQQTYIFIQIVALMPAVPYGRLETNTELLIQPKTRQAKENTFPKAGDAHGQFRSYGQEQKGMSKELQTKQLHMNTEGIPGSNETDPKVPSDSSWKAHWWTMLGSMFSLGPDNRQATSWGSSEISVFKTMQSQDVPLDSVFRVCRVQPPSVRDTPATSVFHKHCTVHVFPWDQEYFDVEPSFTVTYGKLVKLCSPKQQQGKTKQSVMSPEKEKHPLESPNHKQIGSDHTEEAGEACVLKVVWNGLEELKNTTKFTKSIEPLHLGKVWIPDDLRKRLNVEMHAVVRITPLETTPKIPRSLKLQPRENLPEDVSEDDVRTGFSSWLQQSATTMLPLVISKEERIKLGIKDGLKEFSLSVVHCQEREKGRGETAFVLSAVLLRKISVQVLLEPMIREENSEEIDFLLPFLKLNSLGGVNSLGVSAMEHITHSLLGRPLSRQLMSLVAGLRNGALLVTGGKGSGKSTLAKAICQEACDGLDAHVEIVDCKALRGKRLESIQKALEVAFSEAAWRQPSVILLDDLDFIAGLPTVPEQEHSPEAVQSQRLAHALKDMIKELVSVGSLIALIATSQSQCCLQPLLVSAQGIHTFQCVQHIQPPNQEQRCEILQNVVKNKLGCNINKSSDIDLQRIAKETEGFVARDFTVLVDRAIHSHLSRQPVSTREELTLTTSDFHKALHGFLPASLRNVNLHKPRDLGWDKIGGLHEVRQILMDTIQLPAKYPELFANLPIRQRTGILLYGPPGTGKTLLAGVVARESGMNFISIKGPELLSKYIGASEQAVRDVFTRAQAAKPCILFFDEFESIAPRRGHDNTGVTDRVVNQLLTQLDGVEGLQGVYVLAATSRPDLIDPALLRPGRLDKCVYCPPPDQVSRLEILNVLSASLPLAGDVDLQHMASVTESFTGADLKALLYNAQLEALQGRLLPGGLHDGGSSSDSDLSLSSMVFLNHSSGSDDSAADGESGLDQSLVSLEMSEILPDESKFNMYRLYFGSSYESELGNGTSSDLSSQCPSAPSSVTQDFPAAPGKEPLFTQHPMFRTPSQEGYQELTQEQRDQLKAEISIIKGRYQSQSGEDESLSQPGPIKTSFAISQAHLMTALAHTRPSISEEEEKDFAELYENFQNPKKRKNPSGTVFRPGQKVTLA.

Over residues 344–353 (QQGKTKQSVM) the composition is skewed to polar residues. The tract at residues 344–373 (QQGKTKQSVMSPEKEKHPLESPNHKQIGSD) is disordered. Position 354 is a phosphoserine (Ser354). Residues 355 to 373 (PEKEKHPLESPNHKQIGSD) are compositionally biased toward basic and acidic residues. Residues 601–608 (GGKGSGKS) and 883–890 (GPPGTGKT) contribute to the ATP site. A compositionally biased stretch (polar residues) spans 1142–1161 (NGTSSDLSSQCPSAPSSVTQ). The disordered stretch occupies residues 1142–1162 (NGTSSDLSSQCPSAPSSVTQD). Phosphoserine is present on residues Ser1183, Ser1211, and Ser1213. Residues 1262 to 1285 (FQNPKKRKNPSGTVFRPGQKVTLA) form a disordered region.

Belongs to the AAA ATPase family. In terms of assembly, homooligomer; homooligomerizes in the cytosol, interaction with PEX6 promotes dissociation of the homooligomer. Interacts with PEX6; forming the PEX1-PEX6 AAA ATPase complex, which is composed of a heterohexamer formed by a trimer of PEX1-PEX6 dimers. Interacts indirectly with PEX26, via its interaction with PEX6.

The protein resides in the cytoplasm. Its subcellular location is the cytosol. The protein localises to the peroxisome membrane. The catalysed reaction is ATP + H2O = ADP + phosphate + H(+). Its function is as follows. Component of the PEX1-PEX6 AAA ATPase complex, a protein dislocase complex that mediates the ATP-dependent extraction of the PEX5 receptor from peroxisomal membranes, an essential step for PEX5 recycling. Specifically recognizes PEX5 monoubiquitinated at 'Cys-11', and pulls it out of the peroxisome lumen through the PEX2-PEX10-PEX12 retrotranslocation channel. Extraction by the PEX1-PEX6 AAA ATPase complex is accompanied by unfolding of the TPR repeats and release of bound cargo from PEX5. This chain is Peroxisomal ATPase PEX1, found in Cricetulus griseus (Chinese hamster).